Reading from the N-terminus, the 447-residue chain is Signal recognition particle protein (447 aa).

Residues 108 to 115 (GLQGSGKT), 190 to 194 (DTAGR), and 248 to 251 (TKLD) contribute to the GTP site.

It belongs to the GTP-binding SRP family. SRP54 subfamily. Part of the signal recognition particle protein translocation system, which is composed of SRP and FtsY. Interacts with RNA.

The protein resides in the cytoplasm. It catalyses the reaction GTP + H2O = GDP + phosphate + H(+). Functionally, involved in targeting and insertion of nascent membrane proteins into the cytoplasmic membrane. Binds to the hydrophobic signal sequence of the ribosome-nascent chain (RNC) as it emerges from the ribosomes. The SRP-RNC complex is then targeted to the cytoplasmic membrane where it interacts with the SRP receptor FtsY. The polypeptide is Signal recognition particle protein (Mycoplasma mycoides).